A 473-amino-acid chain; its full sequence is MTIPTDNNSSNNKGYNDNNNNNNNNNNNNNNNNNNNNNNNKEHPNINNNNNNNNNNNNNNIKESSSSNSNHSSSQSSSTATVNSNPKVYPYEIIKQVGQGTFGKVYEAKNQDNKRVAIKKVEKSNHFISREYDILKIVAHPNCLRILDMFYTAEDNKKMQNLVFDFIPYTLASLLKKRQLSINFIKVLFYQLCQAIKHIHSKAICHRDITPNNILLSSKGELTLADFGSAKILESNHTSMSYICSRYYRAPELLVGCSNYTTKIDIWSIGCILAEMLIGKPLFPGTNSNDQLGRIIEVLGSPTKDDMEAMKPSKPYHLQLPNINPKFFESLHNVEDKTVVDLLSKIFIFDPVKRASIDEIIAHPFLRDVNINSLELFDEMKCFSVSGNGKSSLTTNSTSSSSTTANMTSLASSSSNNKTTCSETYLSRLPTSAITSSSNLKSIDNSNNGKSSSSSNNIPSLNNSNNGVITNTI.

Residues 1-84 (MTIPTDNNSS…QSSSTATVNS (84 aa)) form a disordered region. Low complexity predominate over residues 7–84 (NNSSNNKGYN…QSSSTATVNS (78 aa)). Positions 91–366 (YEIIKQVGQG…IDEIIAHPFL (276 aa)) constitute a Protein kinase domain. ATP contacts are provided by residues 97 to 105 (VGQGTFGKV) and lysine 119. Aspartate 208 acts as the Proton acceptor in catalysis. 2 disordered regions span residues 389-418 (GKSS…SNNK) and 437-473 (SSNL…TNTI). The segment covering 442 to 466 (SIDNSNNGKSSSSSNNIPSLNNSNN) has biased composition (low complexity).

This sequence belongs to the protein kinase superfamily. CMGC Ser/Thr protein kinase family. GSK-3 subfamily.

It catalyses the reaction L-seryl-[tau protein] + ATP = O-phospho-L-seryl-[tau protein] + ADP + H(+). It carries out the reaction L-threonyl-[tau protein] + ATP = O-phospho-L-threonyl-[tau protein] + ADP + H(+). This chain is Probable serine/threonine-protein kinase glkA (glkA), found in Dictyostelium discoideum (Social amoeba).